The sequence spans 42 residues: Protein Tat (42 aa).

Residues 1-24 (MEPVDPNLEPWNHPGSQPKTACNQ) are interaction with human CREBBP. Positions 22-37 (CNQCYCKKCSYHCLVC) are cysteine-rich. The residue at position 28 (K28) is an N6-acetyllysine; by host PCAF.

Belongs to the lentiviruses Tat family. In terms of assembly, interacts with host CCNT1. Associates with the P-TEFb complex composed at least of Tat, P-TEFb (CDK9 and CCNT1), TAR RNA, RNA Pol II. Recruits the HATs CREBBP, TAF1/TFIID, EP300, PCAF and GCN5L2. Interacts with host KAT5/Tip60; this interaction targets the latter to degradation. Interacts with the host deacetylase SIRT1. Interacts with host capping enzyme RNGTT; this interaction stimulates RNGTT. Binds to host KDR, and to the host integrins ITGAV/ITGB3 and ITGA5/ITGB1. Interacts with host KPNB1/importin beta-1 without previous binding to KPNA1/importin alpha-1. Interacts with EIF2AK2. Interacts with host nucleosome assembly protein NAP1L1; this interaction may be required for the transport of Tat within the nucleus, since the two proteins interact at the nuclear rim. Interacts with host C1QBP/SF2P32; this interaction involves lysine-acetylated Tat. Interacts with the host chemokine receptors CCR2, CCR3 and CXCR4. Interacts with host DPP4/CD26; this interaction may trigger an anti-proliferative effect. Interacts with host LDLR. Interacts with the host extracellular matrix metalloproteinase MMP1. Interacts with host PRMT6; this interaction mediates Tat's methylation. Interacts with, and is ubiquitinated by MDM2/Hdm2. Interacts with host PSMC3 and HTATIP2. Interacts with STAB1; this interaction may overcome SATB1-mediated repression of IL2 and IL2RA (interleukin) in T cells by binding to the same domain than HDAC1. Interacts (when acetylated) with human CDK13, thereby increasing HIV-1 mRNA splicing and promoting the production of the doubly spliced HIV-1 protein Nef. Interacts with host TBP; this interaction modulates the activity of transcriptional pre-initiation complex. Interacts with host RELA. Interacts with host PLSCR1; this interaction negatively regulates Tat transactivation activity by altering its subcellular distribution. In terms of processing, phosphorylated by EIF2AK2 on serine and threonine residues adjacent to the basic region important for TAR RNA binding and function. Phosphorylation of Tat by EIF2AK2 is dependent on the prior activation of EIF2AK2 by dsRNA. Asymmetrical arginine methylation by host PRMT6 seems to diminish the transactivation capacity of Tat and affects the interaction with host CCNT1. Post-translationally, polyubiquitination by host MDM2 does not target Tat to degradation, but activates its transactivation function and fosters interaction with CCNT1 and TAR RNA.

It localises to the host nucleus. The protein resides in the host nucleolus. The protein localises to the host cytoplasm. Its subcellular location is the secreted. Its function is as follows. Transcriptional activator that increases RNA Pol II processivity, thereby increasing the level of full-length viral transcripts. Recognizes a hairpin structure at the 5'-LTR of the nascent viral mRNAs referred to as the transactivation responsive RNA element (TAR) and recruits the cyclin T1-CDK9 complex (P-TEFb complex) that will in turn hyperphosphorylate the RNA polymerase II to allow efficient elongation. The CDK9 component of P-TEFb and other Tat-activated kinases hyperphosphorylate the C-terminus of RNA Pol II that becomes stabilized and much more processive. Other factors such as HTATSF1/Tat-SF1, SUPT5H/SPT5, and HTATIP2 are also important for Tat's function. Besides its effect on RNA Pol II processivity, Tat induces chromatin remodeling of proviral genes by recruiting the histone acetyltransferases (HATs) CREBBP, EP300 and PCAF to the chromatin. This also contributes to the increase in proviral transcription rate, especially when the provirus integrates in transcriptionally silent region of the host genome. To ensure maximal activation of the LTR, Tat mediates nuclear translocation of NF-kappa-B by interacting with host RELA. Through its interaction with host TBP, Tat may also modulate transcription initiation. Tat can reactivate a latently infected cell by penetrating in it and transactivating its LTR promoter. In the cytoplasm, Tat is thought to act as a translational activator of HIV-1 mRNAs. Functionally, extracellular circulating Tat can be endocytosed by surrounding uninfected cells via the binding to several surface receptors such as CD26, CXCR4, heparan sulfate proteoglycans (HSPG) or LDLR. Neurons are rarely infected, but they internalize Tat via their LDLR. Through its interaction with nuclear HATs, Tat is potentially able to control the acetylation-dependent cellular gene expression. Modulates the expression of many cellular genes involved in cell survival, proliferation or in coding for cytokines or cytokine receptors. Tat plays a role in T-cell and neurons apoptosis. Tat induced neurotoxicity and apoptosis probably contribute to neuroAIDS. Circulating Tat also acts as a chemokine-like and/or growth factor-like molecule that binds to specific receptors on the surface of the cells, affecting many cellular pathways. In the vascular system, Tat binds to ITGAV/ITGB3 and ITGA5/ITGB1 integrins dimers at the surface of endothelial cells and competes with bFGF for heparin-binding sites, leading to an excess of soluble bFGF. In Human immunodeficiency virus type 1 group M subtype C (isolate ETH2220) (HIV-1), this protein is Protein Tat.